The sequence spans 183 residues: Holliday junction branch migration complex subunit RuvA (183 aa).

Residues 1–63 (MIVGLIGVVE…EDANLLYGFL (63 aa)) are domain I. The segment at 64–139 (EESEKILFER…FFIQDENRPA (76 aa)) is domain II. Alanine 139 is a region of interest (flexible linker). Residues 139 to 183 (ARNEVFLALESLGFKSAEINKVLKTLKPNLSIEAAIKEALQQLRS) form a domain III region.

The protein belongs to the RuvA family. Homotetramer. Forms an RuvA(8)-RuvB(12)-Holliday junction (HJ) complex. HJ DNA is sandwiched between 2 RuvA tetramers; dsDNA enters through RuvA and exits via RuvB. An RuvB hexamer assembles on each DNA strand where it exits the tetramer. Each RuvB hexamer is contacted by two RuvA subunits (via domain III) on 2 adjacent RuvB subunits; this complex drives branch migration. In the full resolvosome a probable DNA-RuvA(4)-RuvB(12)-RuvC(2) complex forms which resolves the HJ.

Its subcellular location is the cytoplasm. Functionally, the RuvA-RuvB-RuvC complex processes Holliday junction (HJ) DNA during genetic recombination and DNA repair, while the RuvA-RuvB complex plays an important role in the rescue of blocked DNA replication forks via replication fork reversal (RFR). RuvA specifically binds to HJ cruciform DNA, conferring on it an open structure. The RuvB hexamer acts as an ATP-dependent pump, pulling dsDNA into and through the RuvAB complex. HJ branch migration allows RuvC to scan DNA until it finds its consensus sequence, where it cleaves and resolves the cruciform DNA. In Helicobacter pylori (strain HPAG1), this protein is Holliday junction branch migration complex subunit RuvA.